A 514-amino-acid polypeptide reads, in one-letter code: Vacuolar aminopeptidase 1 (514 aa).

Positions 1–45 (MEEQREILEQLKKTLQMLTVEPSKNNQIANEEKEKKENENSWCIL) are cleaved as a propeptide — required for vacuolar localization. Mediates aggregation and vesicle formation in Cvt pathway. N-linked (GlcNAc...) asparagine glycans are attached at residues Asn107 and Asn110. His132 provides a ligand contact to Zn(2+). His210 provides a ligand contact to substrate. Residues Asp303, Glu339, and Glu340 each contribute to the Zn(2+) site. Glu339 provides a ligand contact to substrate. Ser356 bears the Phosphoserine mark. Zn(2+) is bound at residue Asp385. Substrate-binding residues include Asp385 and His388. N-linked (GlcNAc...) asparagine glycosylation is present at Asn448. His479 is a Zn(2+) binding site.

It belongs to the peptidase M18 family. As to quaternary structure, homododecamer. The precursor form of aminopeptidase 1 (prApe1) assembles into dodecamers and further aggregates into higher multimers (the Ape1 complex) in the cytoplasm. The Ape1 complex is disaggregated in the vacuolar lumen, but mature aminopeptidase 1 (mApe1) retains its dodecameric form. Dodecamer assembly in the cytoplasm is essential for formation of an enzymatically active complex. If cytoplasmic homododecamerization of prApe1 is disturbed in mutants, homododecamers of mApe1 will form in the vacuole, but they are enzymatically inactive. Interacts with ATG19. Zn(2+) is required as a cofactor. Synthesized in a precursor form (prApe1) that has an amino-terminal propeptide. The N-terminal extension of the 61 kDa precursor is proteolytically processed in two sequential steps. The first step involves proteinase A (PrA/PEP4) and produces a 55 kDa unstable intermediate (iAPI). The second step involves proteinase B (PrB/PRB1) and converts iAPI into the 50 kDa stable, mature enzyme (mApe1).

It localises to the vacuole. The enzyme catalyses Release of an N-terminal amino acid, preferably a neutral or hydrophobic one, from a polypeptide. Aminoacyl-arylamides are poor substrates.. With respect to regulation, strongly and specifically activated by Cl(-) and Br(-), which act as positive allosteric effectors. Inactivated by metal-chelating agents. In terms of biological role, resident vacuolar enzyme that catalyzes the removal of amino acids from the N-terminus of peptides and proteins. Also acts as the major cargo protein of the cytoplasm-to-vacuole targeting (Cvt) pathway. The precursor form of aminopeptidase 1 (prApe1) assembles into dodecamers and the propeptide mediates the aggregation of dodecamers into higher multimers. The multimers are then recognized via the propeptide by their receptor ATG19, and ATG19 further interacts with ATG11, which tethers the APE1-ATG19 complex to the pre-autophagosomal structure (PAS). The cargo-receptor complex (also Cvt complex) is selectively enwrapped by a double-membrane structure termed the Cvt vesicle under vegetative growth conditions and by a similar but larger double-membrane structure termed the autophagosome under nitrogen starvation conditions. The Cvt vesicle or the autophagosome fuses with the vacuolar membrane and release its content in the vacuolar lumen. In the vacuole, prApe1 is processed into mature aminopeptidase 1 (mApe1). This chain is Vacuolar aminopeptidase 1, found in Saccharomyces cerevisiae (strain ATCC 204508 / S288c) (Baker's yeast).